A 702-amino-acid chain; its full sequence is Ferrioxamine B receptor (702 aa).

Positions 1 to 30 (MPLEMFMFATTRMALLIGGAIGGATFPLFA) are cleaved as a signal peptide. The TBDR plug domain occupies 55-168 (PDIETPQSVS…PGGIVALTSR (114 aa)). The region spanning 173–702 (DAGGEVKLFA…SIVGSVSWAF (530 aa)) is the TBDR beta-barrel domain.

The protein belongs to the TonB-dependent receptor family.

It localises to the cell outer membrane. Its function is as follows. Ferrioxamine binding and uptake, in association with the TonB protein. May play a role in intestinal colonization. This Salmonella typhimurium (strain SL1344) protein is Ferrioxamine B receptor (foxA).